Reading from the N-terminus, the 296-residue chain is Nucleotide-binding protein SPT_1506 (296 aa).

13–20 (GMSGAGKT) is a binding site for ATP. 63–66 (DMRS) contributes to the GTP binding site.

It belongs to the RapZ-like family.

Functionally, displays ATPase and GTPase activities. In Streptococcus pneumoniae (strain Taiwan19F-14), this protein is Nucleotide-binding protein SPT_1506.